The primary structure comprises 274 residues: Trypsin-1 (274 aa).

Positions 1 to 18 (MSNKIAILLAVLVAVVAC) are cleaved as a signal peptide. Residues 19–47 (AEAQANQRHRLVRPSPSFSPRPRYAVGQR) constitute a propeptide, activation peptide. In terms of domain architecture, Peptidase S1 spans 48–273 (IVGGFEIDVS…VRDWVRENSG (226 aa)). The cysteines at positions 73 and 89 are disulfide-linked. Catalysis depends on charge relay system residues His88 and Asp133. 2 disulfides stabilise this stretch: Cys198–Cys214 and Cys225–Cys249. The Charge relay system role is filled by Ser229.

It belongs to the peptidase S1 family. In terms of tissue distribution, constitutively expressed at low level in the gut of adult females. Also expressed in the gut of male and female pupae.

It is found in the secreted. The enzyme catalyses Preferential cleavage: Arg-|-Xaa, Lys-|-Xaa.. In terms of biological role, major function may be to aid in digestion of the blood meal. The sequence is that of Trypsin-1 (TRYP1) from Anopheles gambiae (African malaria mosquito).